The following is a 1153-amino-acid chain: Duffy receptor beta form (1153 aa).

A signal peptide spans 1–21 (MEGKKKRPLFFLLVLLLSHKA). Topologically, residues 22-1085 (NNVLFERMKG…YECFTKGSST (1064 aa)) are extracellular. Residues asparagine 134, asparagine 179, and asparagine 202 are each glycosylated (N-linked (GlcNAc...) asparagine). 2 disulfides stabilise this stretch: cysteine 214/cysteine 243 and cysteine 227/cysteine 234. Residues asparagine 252 and asparagine 348 are each glycosylated (N-linked (GlcNAc...) asparagine). Cystine bridges form between cysteine 297-cysteine 374, cysteine 412-cysteine 429, cysteine 424-cysteine 504, and cysteine 433-cysteine 502. N-linked (GlcNAc...) asparagine glycans are attached at residues asparagine 430 and asparagine 467. Disordered regions lie at residues 520–545 (LKSA…GAEK), 565–591 (DEAA…DNIE), 612–631 (RGAT…SYSG), and 655–981 (ENSE…LYSH). Polar residues-rich tracts occupy residues 531–542 (SHSTIQPMSSSG) and 574–586 (NGNQ…NIKG). N-linked (GlcNAc...) asparagine glycans are attached at residues asparagine 576 and asparagine 626. Basic and acidic residues predominate over residues 661–675 (LETKHKIFEPSKDNS). A compositionally biased stretch (polar residues) spans 677–733 (NSENSGSMEFKATSSNPITEAVESSSAEGQVQEDSAHRSVNTGRDNSTISAATSDDG). Asparagine 722 carries N-linked (GlcNAc...) asparagine glycosylation. Over residues 791-800 (IDGKNVDIAE) the composition is skewed to basic and acidic residues. Polar residues predominate over residues 819 to 834 (TDNGNVPRSGNKQNEG). N-linked (GlcNAc...) asparagine glycosylation is found at asparagine 847 and asparagine 856. Over residues 867–878 (GNEKDFQKHDFM) the composition is skewed to basic and acidic residues. Over residues 884 to 942 (NDQTSSDQTSSDQTSSNQTSSDQTSSNQTSSDQTSSDQISSDQTSSDQTSSNQTSSDQT) the composition is skewed to low complexity. N-linked (GlcNAc...) asparagine glycosylation is found at asparagine 900, asparagine 910, and asparagine 935. Residues 945–969 (TEEHHRDNVRNPEIKSSEDMSKGDF) show a composition bias toward basic and acidic residues. The segment covering 971 to 981 (RNSNSNELYSH) has biased composition (polar residues). A helical membrane pass occupies residues 1086–1106 (GIGIVYFATGGAFLIILLLFV). Topologically, residues 1107–1153 (SKNVASNDYEEEATFDEFVEYSDDIHRTPLMPNHIEHMQQFTPLDYS) are cytoplasmic.

It is found in the membrane. In terms of biological role, binds to Neu5Gc-sialylated receptors on macaque erythrocytes. In Plasmodium knowlesi, this protein is Duffy receptor beta form.